The following is a 139-amino-acid chain: MTSSRLSLAADARDSILSHAREGAAGDPPAEVCGVLAGDSDARTVTAAHPVSNVAAEPRVAYELDPEETVSILEAIESAGDDAVGFYHSHPESDPVPSATDRERASWPGYVYLICSPDGRMTAHEWTGDEFRELSVAVE.

In terms of domain architecture, MPN spans 6-139 (LSLAADARDS…EFRELSVAVE (134 aa)). Residue Glu-31 is the Proton donor/acceptor of the active site. Residues His-88, His-90, and Asp-101 each coordinate Zn(2+). The JAMM motif signature appears at 88-101 (HSHPESDPVPSATD).

It belongs to the peptidase M67B family. As to quaternary structure, monomer. Requires Zn(2+) as cofactor.

The enzyme catalyses an N(6)-[small archaeal modifier protein]-[protein]-L-lysine + H2O = a [protein]-L-lysine + a [small archaeal modifier protein].. With respect to regulation, inhibited by EDTA and N-ethylmaleimide (NEM) in vitro. In terms of biological role, metalloprotease that displays desampylase (DSAMP) activity, cleaving ubiquitin-like small archaeal modifier proteins (SAMP1, SAMP2 and SAMP3) from protein conjugates (isopeptide- and linear-linked). Thus, likely regulates sampylation and the pools of 'free' SAMP available for protein modification. Functions as a specific and not a general protease since it is unable to hydrolyze a variety of unmodified proteins otherwise hydrolyzed by proteinase K. The chain is Desampylase from Haloferax volcanii (strain ATCC 29605 / DSM 3757 / JCM 8879 / NBRC 14742 / NCIMB 2012 / VKM B-1768 / DS2) (Halobacterium volcanii).